Here is a 229-residue protein sequence, read N- to C-terminus: 1-(5-phosphoribosyl)-5-[(5-phosphoribosylamino)methylideneamino] imidazole-4-carboxamide isomerase (229 aa).

Residue Asp8 is the Proton acceptor of the active site. Asp125 serves as the catalytic Proton donor.

This sequence belongs to the HisA/HisF family.

The protein localises to the cytoplasm. It carries out the reaction 1-(5-phospho-beta-D-ribosyl)-5-[(5-phospho-beta-D-ribosylamino)methylideneamino]imidazole-4-carboxamide = 5-[(5-phospho-1-deoxy-D-ribulos-1-ylimino)methylamino]-1-(5-phospho-beta-D-ribosyl)imidazole-4-carboxamide. The protein operates within amino-acid biosynthesis; L-histidine biosynthesis; L-histidine from 5-phospho-alpha-D-ribose 1-diphosphate: step 4/9. The chain is 1-(5-phosphoribosyl)-5-[(5-phosphoribosylamino)methylideneamino] imidazole-4-carboxamide isomerase from Thermococcus onnurineus (strain NA1).